Here is a 1251-residue protein sequence, read N- to C-terminus: Myosin-1 (1251 aa).

Residues 1–37 (MGQSKRPFKNKEEKKSRGFGRSRHDDAGAGGRPQVKK) are disordered. Residues 9 to 27 (KNKEEKKSRGFGRSRHDDA) show a composition bias toward basic and acidic residues. Residues 48–727 (IGVSDLTLLS…TLFALEHMRD (680 aa)) enclose the Myosin motor domain. 141–148 (GESGAGKT) serves as a coordination point for ATP. A Phosphoserine modification is found at Ser-369. Positions 416–498 (TIGILDIYGF…PGVFAALNDA (83 aa)) are actin-binding. IQ domains lie at 731–751 (HNMA…RTEC) and 752–777 (AIRI…QGHK). The 196-residue stretch at 785-980 (RRRYSLVGSR…PGEPANSVSK (196 aa)) folds into the TH1 domain. 2 disordered regions span residues 958 to 1093 (RDDV…SNEL) and 1135 to 1227 (AKTP…ASIA). The span at 1040 to 1052 (VAQSVTAVAAAHA) shows a compositional bias: low complexity. Residues 1061 to 1073 (RPPPPPPPTQPPA) are compositionally biased toward pro residues. In terms of domain architecture, SH3 spans 1074–1135 (PKKDTAKALY…PEAYLEPIVA (62 aa)). Residues 1139 to 1148 (SLPPPPPSLP) are compositionally biased toward pro residues. Composition is skewed to polar residues over residues 1150-1161 (QSKSAVSNTLPN) and 1216-1225 (ATPSSLSNAS).

This sequence belongs to the TRAFAC class myosin-kinesin ATPase superfamily. Myosin family. Phosphorylation of the TEDS site (Ser-369) is required for the polarization of the actin cytoskeleton. Phosphorylation probably activates the myosin-I ATPase activity.

It localises to the cytoplasm. Its subcellular location is the cytoskeleton. The protein localises to the actin patch. Its function is as follows. Type-I myosin implicated in the organization of the actin cytoskeleton. Required for proper actin cytoskeleton polarization. At the cell cortex, assembles in patch-like structures together with proteins from the actin-polymerizing machinery and promotes actin assembly. Functions as actin nucleation-promoting factor (NPF) for the Arp2/3 complex. The sequence is that of Myosin-1 (MYO1) from Coccidioides immitis (strain RS) (Valley fever fungus).